We begin with the raw amino-acid sequence, 152 residues long: Natriuretic peptides A (152 aa).

The first 24 residues, 1 to 24 (MGSFSITKGFFLFLAFWLPGHIGA), serve as a signal peptide directing secretion. 2 consecutive propeptides follow at residues 25–122 (NPVY…AGPR) and 92–102 (DGGALGRGPWD). The segment at 54-104 (DEVMPPQALSEQTDEAGAALSSLSEVPPWTGEVNPSQRDGGALGRGPWDPS) is disordered. The residue at position 128 (Ser128) is a Phosphoserine. Cysteines 129 and 145 form a disulfide. The tract at residues 146–150 (NSFRY) is important for degradation of atrial natriuretic peptide by IDE.

It belongs to the natriuretic peptide family. As to quaternary structure, homodimer; disulfide-linked antiparallel dimer. Post-translationally, the precursor molecule is proteolytically cleaved by CORIN at Arg-122 to produce the atrial natriuretic peptide. Undergoes further proteolytic cleavage by unknown proteases to give rise to long-acting natriuretic peptide, vessel dilator and kaliuretic peptide. Additional processing gives rise to the auriculin and atriopeptin peptides. In the kidneys, alternative processing by an unknown protease results in the peptide urodilatin. In terms of processing, cleavage by MME initiates degradation of the factor and thereby regulates its activity. Degradation by IDE results in reduced activation of NPR1 (in vitro). During IDE degradation, the resulting products can temporarily stimulate NPR2 to produce cGMP, before the fragments are completely degraded and inactivated by IDE (in vitro). Degraded by IDE. Post-translationally, phosphorylation on Ser-128 decreases vasorelaxant activity. High levels of expression in the atria compared to the ventricles. Very low levels of expression detected in extracardiac tissues such as the brain, hypothalamus, pituitary, lung and aorta. As to expression, atria (at protein level). In terms of tissue distribution, high levels of expression in the atria with very low levels of expression in the ventricles (at protein level). Relatively low levels of expression detected in the brain compared to the atria (at protein level).

Its subcellular location is the secreted. The protein localises to the perikaryon. It is found in the cell projection. In terms of biological role, hormone that plays a key role in mediating cardio-renal homeostasis, and is involved in vascular remodeling and regulating energy metabolism. Acts by specifically binding and stimulating NPR1 to produce cGMP, which in turn activates effector proteins, such as PRKG1, that drive various biological responses. Regulates vasodilation, natriuresis, diuresis and aldosterone synthesis and is therefore essential for regulating blood pressure, controlling the extracellular fluid volume and maintaining the fluid-electrolyte balance. Also involved in inhibiting cardiac remodeling and cardiac hypertrophy by inducing cardiomyocyte apoptosis and attenuating the growth of cardiomyocytes and fibroblasts. Plays a role in female pregnancy by promoting trophoblast invasion and spiral artery remodeling in uterus, and thus prevents pregnancy-induced hypertension. In adipose tissue, acts in various cGMP- and PKG-dependent pathways to regulate lipid metabolism and energy homeostasis. This includes up-regulating lipid metabolism and mitochondrial oxygen utilization by activating the AMP-activated protein kinase (AMPK), and increasing energy expenditure by acting via MAPK11 to promote the UCP1-dependent thermogenesis of brown adipose tissue. Binds the clearance receptor NPR3 which removes the hormone from circulation. Functionally, may have a role in cardio-renal homeostasis through regulation of natriuresis, diuresis, vasodilation, and inhibiting aldosterone synthesis. In vitro, promotes the production of cGMP and induces vasodilation. May promote natriuresis, at least in part, by enhancing prostaglandin E2 synthesis resulting in the inhibition of renal Na+-K+-ATPase. However reports on the involvement of this peptide in mammal blood volume and blood pressure homeostasis are conflicting; according to a report, in vivo it is not sufficient to activate cGMP and does not inhibit collecting duct transport nor effect diuresis and natriuresis. Appears to bind to specific receptors that are distinct from the receptors bound by atrial natriuretic peptide and vessel dilator. Possibly enhances protein excretion in urine by decreasing proximal tubular protein reabsorption. Its function is as follows. May have a role in cardio-renal homeostasis through regulation of natriuresis, diuresis, and vasodilation. In vitro, promotes the production of cGMP and induces vasodilation. May promote natriuresis, at least in part, by enhancing prostaglandin E2 synthesis resulting in the inhibition of renal Na+-K+-ATPase. However reports on the involvement of this peptide in mammal blood volume and blood pressure homeostasis are conflicting; according to a report, in vivo it is not sufficient to activate cGMP and does not inhibit collecting duct transport nor effect diuresis and natriuresis. Appears to bind to specific receptors that are distinct from the receptors bound by the atrial natriuretic and long-acting natriuretic peptides. Possibly functions in protein excretion in urine by maintaining the integrity of the proximal tubules and enhancing protein excretion by decreasing proximal tubular protein reabsorption. May have a role in cardio-renal homeostasis through regulation of diuresis and inhibiting aldosterone synthesis. In vitro, promotes the production of cGMP and induces vasodilation. May promote natriuresis, at least in part, by enhancing prostaglandin E2 synthesis resulting in the inhibition of renal Na+-K+-ATPase. May have a role in potassium excretion but not sodium excretion (natriuresis). Possibly enhances protein excretion in urine by decreasing proximal tubular protein reabsorption. In terms of biological role, hormone produced in the kidneys that appears to be important for maintaining cardio-renal homeostasis. Mediates vasodilation, natriuresis and diuresis primarily in the renal system, in order to maintain the extracellular fluid volume and control the fluid-electrolyte balance. Specifically binds and stimulates cGMP production by renal transmembrane receptors, likely NPR1. Urodilatin not ANP, may be the natriuretic peptide responsible for the regulation of sodium and water homeostasis in the kidney. Functionally, may have a role in cardio-renal homeostasis through regulation of natriuresis and vasodilation. In vivo promotes natriuresis and in vitro, vasodilates renal artery strips. Its function is as follows. May have a role in cardio-renal homeostasis through regulation of regulation of natriuresis and vasodilation. In vivo promotes natriuresis. In vitro, vasodilates intestinal smooth muscle but not smooth muscle strips. May have a role in cardio-renal homeostasis through regulation of natriuresis and vasodilation. In vivo promotes natriuresis. In vitro, selectively vasodilates intestinal and vascular smooth muscle strips. In terms of biological role, may have a role in cardio-renal homeostasis through regulation of natriuresis and vasodilation. In vivo promotes natriuresis. In vitro, selectively vasodilates intestinal smooth muscle but not vascular smooth muscle strips. This chain is Natriuretic peptides A (Nppa), found in Rattus norvegicus (Rat).